The following is a 267-amino-acid chain: 2-dehydro-3-deoxyphosphooctonate aldolase (267 aa).

Belongs to the KdsA family.

Its subcellular location is the cytoplasm. It catalyses the reaction D-arabinose 5-phosphate + phosphoenolpyruvate + H2O = 3-deoxy-alpha-D-manno-2-octulosonate-8-phosphate + phosphate. Its pathway is carbohydrate biosynthesis; 3-deoxy-D-manno-octulosonate biosynthesis; 3-deoxy-D-manno-octulosonate from D-ribulose 5-phosphate: step 2/3. It participates in bacterial outer membrane biogenesis; lipopolysaccharide biosynthesis. This Campylobacter jejuni subsp. doylei (strain ATCC BAA-1458 / RM4099 / 269.97) protein is 2-dehydro-3-deoxyphosphooctonate aldolase.